The chain runs to 136 residues: Histone H3.2 (136 aa).

The disordered stretch occupies residues 1-43; it reads MARTKQTARKSTGGKAPRKQLATKAARKSAPATGGVKKPHRFR. K5 carries the N6-methylated lysine modification. At K10 the chain carries N6-acetyllysine; alternate. Position 10 is an N6-methylated lysine; alternate (K10). S11 is subject to Phosphoserine. Residue T12 is modified to Phosphothreonine. K15 is subject to N6-acetyllysine. An N6-acetyllysine; alternate mark is found at K19 and K24. Residues K19 and K24 each carry the N6-methylated lysine; alternate modification. At K28 the chain carries N6-methylated lysine. S29 carries the phosphoserine modification. Residue K37 is modified to N6-methylated lysine.

This sequence belongs to the histone H3 family. As to quaternary structure, the nucleosome is a histone octamer containing two molecules each of H2A, H2B, H3 and H4 assembled in one H3-H4 heterotetramer and two H2A-H2B heterodimers. The octamer wraps approximately 147 bp of DNA. Acetylation is generally linked to gene activation. Can be acetylated to form H3K9ac, H3K14ac, H3K18ac and H3K23ac. H3K9ac could compete with H3K9me and prevent gene silencing. H3K9ac is restricted to euchromatin. In terms of processing, methylated to form mainly H3K4me, H3K9me, H3K18me, H3K23me, H3K27me and H3K36me. H3K4me1/2/3, H3K9me3, H3K27me3 and H3K36me1/2/3 are typical marks for euchromatin, whereas heterochromatic chromocenters are enriched in H3K9me1/2 and H3K27me1/2. H2BK143ub1 is probably prerequisite for H3K4me. Post-translationally, can be phosphorylated to form H3S10ph, H3T11ph and H3S28ph.

The protein resides in the nucleus. The protein localises to the chromosome. Functionally, core component of nucleosome. Nucleosomes wrap and compact DNA into chromatin, limiting DNA accessibility to the cellular machineries which require DNA as a template. Histones thereby play a central role in transcription regulation, DNA repair, DNA replication and chromosomal stability. DNA accessibility is regulated via a complex set of post-translational modifications of histones, also called histone code, and nucleosome remodeling. The chain is Histone H3.2 from Encephalartos altensteinii (Altenstein's bread tree).